The following is a 24-amino-acid chain: Bombinin (24 aa).

Position 24 is an asparagine amide (Asn24).

This sequence belongs to the bombinin family. Expressed by the skin glands.

It localises to the secreted. In terms of biological role, has antimicrobial and hemolytic activities. This chain is Bombinin, found in Bombina variegata (Yellow-bellied toad).